We begin with the raw amino-acid sequence, 144 residues long: MNPSRCRIIAIGKVRKSWVQDGIELYRKRLPGLTIVELRDSNPEKEAESIRQTLRRDEWPVMLMEQGETLTSINFSERLRSLGSQRLAFVIGGADGLTAELKALAHWKLSLSPMTFPHELARLLLIEQLFRAQAILQGSPYHRA.

Residues glycine 92 and 111–116 (LSPMTF) contribute to the S-adenosyl-L-methionine site.

It belongs to the RNA methyltransferase RlmH family. As to quaternary structure, homodimer.

It localises to the cytoplasm. The enzyme catalyses pseudouridine(1915) in 23S rRNA + S-adenosyl-L-methionine = N(3)-methylpseudouridine(1915) in 23S rRNA + S-adenosyl-L-homocysteine + H(+). Its function is as follows. Specifically methylates the pseudouridine at position 1915 (m3Psi1915) in 23S rRNA. This chain is Ribosomal RNA large subunit methyltransferase H, found in Synechococcus sp. (strain CC9311).